Here is a 500-residue protein sequence, read N- to C-terminus: Hexose transporter 1 (500 aa).

At 1–25 (MKNSNEISSSQSLKNNGSDGFFNTS) the chain is on the cytoplasmic side. Residues 26 to 46 (LMYVLAACLASFLFGYQVSVL) form a helical membrane-spanning segment. The Extracellular portion of the chain corresponds to 47-75 (NTIKDFIVIEFGWCAGKEVNCDDSTLKSS). A disulfide bridge links Cys-60 with Cys-67. The helical transmembrane segment at 76 to 96 (FLLASVFIGAVVGSGFSGFLV) threads the bilayer. Residues 97 to 101 (QHGRR) lie on the Cytoplasmic side of the membrane. A helical transmembrane segment spans residues 102–122 (FSLLVIYNFFILVSILTSITH). Residues 123–131 (HFHTILFSR) are Extracellular-facing. The chain crosses the membrane as a helical span at residues 132–152 (LLSGFGIGLITVSVPMYISEM). The Cytoplasmic segment spans residues 153–166 (THKDKKGAYGVLHQ). Alpha-D-glucose is bound at residue Gln-166. Gln-166 contributes to the beta-D-glucose binding site. A helical membrane pass occupies residues 167–187 (LFITFGIFIAVLLGMAMGNVP). The Extracellular segment spans residues 188-203 (EEVNNPLGTFQQIWWR). Residues 204–224 (LMFFFPCIISILGIVLLTFFF) form a helical membrane-spanning segment. Residues 225–289 (KEETPYYLFE…RAMKIPSYRY (65 aa)) lie on the Cytoplasmic side of the membrane. Residues 290-310 (VILLGCILSGLQQFTGINVLV) form a helical membrane-spanning segment. The alpha-D-glucose site is built by Gln-301, Gln-302, and Asn-307. Gln-301 serves as a coordination point for beta-D-glucose. Residue Asn-307 participates in beta-D-glucose binding. The Extracellular segment spans residues 311–327 (SNSNALYKGFLTNEWIT). A helical transmembrane segment spans residues 328-348 (TLSVIMTVVNFLMTFPAIYIV). Asn-337 contributes to the beta-D-glucose binding site. Over 349–356 (EKLGRKTL) the chain is Cytoplasmic. The chain crosses the membrane as a helical span at residues 357–377 (LLCGCAGIVCAFLPTAIANLI). At 378-390 (NNTSDVVKKLSIS) the chain is on the extracellular side. A helical transmembrane segment spans residues 391–411 (ATFVMIVSFAVSYGPVLWIYL). Residue Trp-408 participates in alpha-D-glucose binding. The Cytoplasmic portion of the chain corresponds to 412–425 (HEMFPSEIKDSAAS). Residues 426–446 (LASLVNWMCAIIVVFPSDIII) traverse the membrane as a helical segment. The Extracellular portion of the chain corresponds to 447–451 (KQSPT). A helical transmembrane segment spans residues 452–472 (ILFFIFSGMSIVAFLFIFFFI). The Cytoplasmic portion of the chain corresponds to 473-500 (KETKGGEIGTSPYITLEERQKHMGKSVV).

This sequence belongs to the major facilitator superfamily. Sugar transporter (TC 2.A.1.1) family. As to quaternary structure, homodimer.

It is found in the cell membrane. The enzyme catalyses D-glucose(out) = D-glucose(in). It carries out the reaction D-fructose(out) = D-fructose(in). It catalyses the reaction D-galactose(in) = D-galactose(out). The catalysed reaction is D-mannose(out) = D-mannose(in). The enzyme catalyses D-glucosamine(out) = D-glucosamine(in). It carries out the reaction D-xylose(out) = D-xylose(in). Inhibited by cytochalasin B. Its function is as follows. Sodium-independent facilitative hexose transporter. Can transport D-glucose and D-fructose. Can transport D-mannose, D-galactose, D-xylose and D-glucosamine. This chain is Hexose transporter 1, found in Plasmodium knowlesi.